Here is a 278-residue protein sequence, read N- to C-terminus: Sulfur carrier protein FdhD (278 aa).

Cys121 functions as the Cysteine persulfide intermediate in the catalytic mechanism. 260-265 (FCKPGR) contacts Mo-bis(molybdopterin guanine dinucleotide).

It belongs to the FdhD family.

The protein resides in the cytoplasm. In terms of biological role, required for formate dehydrogenase (FDH) activity. Acts as a sulfur carrier protein that transfers sulfur from IscS to the molybdenum cofactor prior to its insertion into FDH. The polypeptide is Sulfur carrier protein FdhD (Salmonella choleraesuis (strain SC-B67)).